A 275-amino-acid polypeptide reads, in one-letter code: Adenylate kinase 2 (275 aa).

G2 carries N-myristoyl glycine lipidation. The tract at residues 21 to 30 (KKKEKKKKKK) is required for cell membrane translocation but dispensable for cell membrane localization. 39–44 (GSGKDT) provides a ligand contact to ATP. The segment at 59–97 (CISKLLKEYKEEYNKENVLNEEENYFDEIEKCMIDGSLV) is NMP. AMP-binding positions include 95–97 (SLV), 126–129 (GFPR), and Q133. An ATP-binding site is contributed by R164. The interval 165–214 (IIDPITNISYNENIIQIIKKKREGQELSDKEQKQLIIDNHLYNNLSNDIL) is LID. R220 and R231 together coordinate AMP.

It belongs to the adenylate kinase family. As to quaternary structure, monomer. Oligomer. Heterodimer composed of NMT and AK2; AK2 myristoylation stabilizes the complex. In terms of processing, myristoylation is required for cell membrane localization. May be palmitoylated at Cys-4 which stabilizes cell membrane localization of the myristoylated protein.

The protein localises to the parasitophorous vacuole membrane. It carries out the reaction AMP + ATP = 2 ADP. Functionally, catalyzes the reversible transfer of the terminal phosphate group between ATP and AMP. Has very low activity with CTP, GTP, ITP and UTP and no activity with GMP, UMP or IMP in vitro. This Plasmodium falciparum (isolate 3D7) protein is Adenylate kinase 2.